The sequence spans 353 residues: rRNA methyltransferase 1, mitochondrial (353 aa).

The N-terminal 20 residues, 1–20, are a transit peptide targeting the mitochondrion; the sequence is MALLSTVRGATWGRLVTRHF. A disordered region spans residues 311–353; the sequence is PTEGERRQLLQDPQEPSARSEGLSMAQHPGLSSGPEKERQNEG.

The protein belongs to the class IV-like SAM-binding methyltransferase superfamily. RNA methyltransferase TrmH family.

It localises to the mitochondrion matrix. The enzyme catalyses guanosine(1145) in 16S rRNA + S-adenosyl-L-methionine = 2'-O-methylguanosine(1145) in 16S rRNA + S-adenosyl-L-homocysteine + H(+). Its function is as follows. S-adenosyl-L-methionine-dependent 2'-O-ribose methyltransferase that catalyzes the formation of 2'-O-methylguanosine at position 1145 (Gm1145) in the 16S mitochondrial large subunit ribosomal RNA (mtLSU rRNA), a universally conserved modification in the peptidyl transferase domain of the mtLSU rRNA. This Homo sapiens (Human) protein is rRNA methyltransferase 1, mitochondrial.